Consider the following 550-residue polypeptide: Complement control protein (550 aa).

The N-terminal stretch at 1-19 is a signal peptide; the sequence is MAFLRQTLWILWTFTMVIG. Sushi domains lie at 23–83, 84–150, 151–209, and 210–268; these read EKCS…TCNK, KSCP…FCEK, EKCH…TCEL, and AGCK…KCVL. Cystine bridges form between Cys25-Cys68, Cys53-Cys81, Cys86-Cys131, Cys116-Cys148, Cys153-Cys194, Cys180-Cys207, Cys212-Cys254, and Cys240-Cys266. Asn63 and Asn111 each carry an N-linked (GlcNAc...) asparagine; by host glycan. Asn197 carries an N-linked (GlcNAc...) asparagine; by host glycan. Asn255, Asn275, and Asn299 each carry an N-linked (GlcNAc...) asparagine; by host glycan. The tract at residues 269 to 338 is disordered; the sequence is EDIDDPNNSN…TSEGFNETTT (70 aa). Polar residues-rich tracts occupy residues 288-302 and 312-321; these read EKPN…NYTE and TAATCDTNCE. N-linked (GlcNAc...) asparagine; by host glycosylation is found at Asn334, Asn371, Asn374, and Asn378. 2 disordered regions span residues 387 to 408 and 420 to 516; these read TPTS…NYNT and IEEG…RPPA. Polar residues predominate over residues 424–440; it reads PSNSTTSEKATASTLSH. N-linked (GlcNAc...) asparagine; by host glycans are attached at residues Asn426, Asn445, Asn455, and Asn483. Polar residues predominate over residues 450-476; it reads IYTTLNKTTQLPSTNKPTNSQAKSSTK. Over residues 484–495 the composition is skewed to polar residues; that stretch reads KTTSNPAISLTD. The helical transmembrane segment at 528-548 threads the bilayer; the sequence is IGLLTAVALTCGLITLFHYLF.

The protein resides in the host membrane. It is found in the virion membrane. Functionally, inhibits the complement component of the host innate immune response. Regulates host C3 convertases, accelerating their decay, and acts as a cofactor for factor I degradation of C4b and C3b. Also binds heparin, and therefore may play two distinct roles when incorporated in virion membranes: immune evasion and host cell binding. This chain is Complement control protein (ORF4), found in Human herpesvirus 8 type P (isolate GK18) (HHV-8).